A 231-amino-acid chain; its full sequence is Large ribosomal subunit protein uL1 (231 aa).

Belongs to the universal ribosomal protein uL1 family. In terms of assembly, part of the 50S ribosomal subunit.

In terms of biological role, binds directly to 23S rRNA. The L1 stalk is quite mobile in the ribosome, and is involved in E site tRNA release. Functionally, protein L1 is also a translational repressor protein, it controls the translation of the L11 operon by binding to its mRNA. The polypeptide is Large ribosomal subunit protein uL1 (Pseudomonas syringae pv. syringae (strain B728a)).